The primary structure comprises 78 residues: MKVAANSSKMLAEKLELMKGGRRRRRRSRRRRRRSRRRSRSPYRRRYRRRRRRRRRRSRRRRYRRRRSYSRRRYRRRR.

The segment at 1-21 (MKVAANSSKMLAEKLELMKGG) is hydrophobic. Positions 1 to 78 (MKVAANSSKM…YSRRRYRRRR (78 aa)) are disordered. Positions 20 to 78 (GGRRRRRRSRRRRRRSRRRSRSPYRRRYRRRRRRRRRRSRRRRYRRRRSYSRRRYRRRR) are enriched in basic residues.

Post-translationally, phosphorylation occurs at different degrees. The triphosphorylated form may be predominant in T1. SP1 appears to be phosphorylated in elongated spermatids, but dephosphorylated in mature sperm cells. Testis.

It is found in the nucleus. It localises to the chromosome. Functionally, cuttlefish spermiogenesis is characterized by a double nuclear protein transition: histones -&gt; spermatid-specific proteins (T1/T2) -&gt; protamines (SP1/SP2). The protamines compact sperm DNA into a highly condensed, stable and inactive complex. The chain is Spermatid-specific protein T1 from Sepia officinalis (Common cuttlefish).